The following is a 227-amino-acid chain: MDYRRLKDLPEELLPRERLFQYGADALSNREILAILLRTGVKGENVLDFSERLLTETGGLSGLARLTVHELTRYRGMGTAKAAELKAALELGRRSVSSDPLVRPVINSPQDIAHLVMEEMRYLDREHFRVVSLSTKNHVLGISSISVGSLNSSLVHPRECFKEAIRRNSNAIILLHNHPSGDPTPSSEDIDVTRRLSDGGQILGIEVLDHVIIGDNRYISLKERGIL.

The MPN domain occupies 105–227 (VINSPQDIAH…YISLKERGIL (123 aa)). His176, His178, and Asp189 together coordinate Zn(2+). A JAMM motif motif is present at residues 176–189 (HNHPSGDPTPSSED).

Belongs to the UPF0758 family.

This is UPF0758 protein Dhaf_4352 from Desulfitobacterium hafniense (strain DSM 10664 / DCB-2).